Consider the following 189-residue polypeptide: ComE operon protein 2 (189 aa).

One can recognise a CMP/dCMP-type deaminase domain in the interval serine 5–alanine 132. Histidine 70 contacts Zn(2+). Glutamate 72 acts as the Proton donor in catalysis. 2 residues coordinate Zn(2+): cysteine 98 and cysteine 101.

It belongs to the cytidine and deoxycytidylate deaminase family. It depends on Zn(2+) as a cofactor.

Dispensable for transformability. This is ComE operon protein 2 (comEB) from Bacillus subtilis (strain 168).